Here is a 64-residue protein sequence, read N- to C-terminus: MSQKQLPPVKVRDPTTGKEVELTPIKVWKLSPRGRRGVKIGLFKSPETGKYFRAKVPDDYPETG.

This sequence belongs to the Cren7 family. In terms of assembly, monomer. In terms of processing, methylated at multiple sites, to varying extents.

The protein localises to the chromosome. It is found in the cytoplasm. In terms of biological role, a chromatin protein, binds double-stranded DNA without sequence specificity. Constrains negative DNA supercoils. The sequence is that of Chromatin protein Cren7 from Aeropyrum pernix (strain ATCC 700893 / DSM 11879 / JCM 9820 / NBRC 100138 / K1).